A 324-amino-acid chain; its full sequence is Lactonase drp35 (324 aa).

Positions 47, 109, 111, 129, 132, 134, 137, 184, 235, and 236 each coordinate Ca(2+). Residue D235 is the Proton donor of the active site.

It belongs to the SMP-30/CGR1 family. It depends on Ca(2+) as a cofactor.

The protein localises to the cytoplasm. Exhibits lactonase activity. Acts in cells with perturbed membrane integrity and is possibly related to the membrane homeostasis. The sequence is that of Lactonase drp35 (drp35) from Staphylococcus aureus (strain bovine RF122 / ET3-1).